Here is a 429-residue protein sequence, read N- to C-terminus: Adenylosuccinate synthetase (429 aa).

Residues 12-18 (GDEGKGK) and 40-42 (GHT) each bind GTP. Asp13 serves as the catalytic Proton acceptor. Positions 13 and 40 each coordinate Mg(2+). IMP is bound by residues 13 to 16 (DEGK), 38 to 41 (NAGH), Thr129, Arg143, Gln224, Thr239, and Arg303. His41 serves as the catalytic Proton donor. 299 to 305 (VTTGRAR) contributes to the substrate binding site. GTP-binding positions include Arg305, 331–333 (KLD), and 413–415 (GVG).

The protein belongs to the adenylosuccinate synthetase family. Homodimer. It depends on Mg(2+) as a cofactor.

The protein localises to the cytoplasm. The catalysed reaction is IMP + L-aspartate + GTP = N(6)-(1,2-dicarboxyethyl)-AMP + GDP + phosphate + 2 H(+). Its pathway is purine metabolism; AMP biosynthesis via de novo pathway; AMP from IMP: step 1/2. Functionally, plays an important role in the de novo pathway of purine nucleotide biosynthesis. Catalyzes the first committed step in the biosynthesis of AMP from IMP. This chain is Adenylosuccinate synthetase, found in Rhodococcus erythropolis (strain PR4 / NBRC 100887).